Consider the following 79-residue polypeptide: MIKPLIEFCVGNLASGSQAALEKLEKDPNLDVMEYGCLGYCGICFEGPFALVNGEVVQGSTVEELVNNVYEYLDENPMF.

Belongs to the UPF0349 family.

In Bacillus cereus (strain ZK / E33L), this protein is UPF0349 protein BCE33L4669.